Consider the following 493-residue polypeptide: Dipeptidase 3 (493 aa).

An N-terminal signal peptide occupies residues 1 to 35 (MQPAGLEGPRALGLRPLGHRLSLLGVLLLVPSLWV). Residues 41–60 (TPSPSSAPTTPEASNATTAP) show a composition bias toward low complexity. The disordered stretch occupies residues 41–74 (TPSPSSAPTTPEASNATTAPGIPNDTATSGVTSD). 2 disulfides stabilise this stretch: C143–C222 and C294–C326. N331 carries an N-linked (GlcNAc...) asparagine glycan. Residue S462 is the site of GPI-anchor amidated serine attachment. A propeptide spans 463–493 (KAPPHPLPGLMATLTSLALILWLCCSGHRAV) (removed in mature form).

It belongs to the metallo-dependent hydrolases superfamily. Peptidase M19 family. Homodimer; disulfide-linked. Interacts with TEX101; co-localized on the cell surface of spermatocytes, spermatids, and testicular spermatozoa, co-localized only in cytoplasmic droplets of caput and corpus epididymal sperm. As to expression, expressed in testis but not ovary.

It is found in the membrane. Its function is as follows. Lacks dipeptidase activity and is unable to hydrolyze cystinyl-bis-glycine. The absence of activity may be due to the inability of serine (instead of aspartate found in DPEP1/2) at position 356 to function as the acid/base catalyst and activate the nucleophilic water/hydroxide. Does not hydrolyze leukotriene D4 (LTD4) into leukotriene E4 (LTE4). Does not hydrolyze the beta-lactam antibiotic imipenem. This Mus musculus (Mouse) protein is Dipeptidase 3 (Dpep3).